The chain runs to 931 residues: Isoleucine--tRNA ligase (931 aa).

The short motif at proline 57–histidine 67 is the 'HIGH' region element. An L-isoleucyl-5'-AMP-binding site is contributed by glutamate 556. The short motif at lysine 597 to serine 601 is the 'KMSKS' region element. Lysine 600 is a binding site for ATP. Residues cysteine 890, cysteine 893, cysteine 910, and cysteine 913 each coordinate Zn(2+).

It belongs to the class-I aminoacyl-tRNA synthetase family. IleS type 1 subfamily. In terms of assembly, monomer. Requires Zn(2+) as cofactor.

It localises to the cytoplasm. The catalysed reaction is tRNA(Ile) + L-isoleucine + ATP = L-isoleucyl-tRNA(Ile) + AMP + diphosphate. In terms of biological role, catalyzes the attachment of isoleucine to tRNA(Ile). As IleRS can inadvertently accommodate and process structurally similar amino acids such as valine, to avoid such errors it has two additional distinct tRNA(Ile)-dependent editing activities. One activity is designated as 'pretransfer' editing and involves the hydrolysis of activated Val-AMP. The other activity is designated 'posttransfer' editing and involves deacylation of mischarged Val-tRNA(Ile). The chain is Isoleucine--tRNA ligase from Lactobacillus delbrueckii subsp. bulgaricus (strain ATCC BAA-365 / Lb-18).